The sequence spans 503 residues: Putative aldehyde dehydrogenase-like protein C9E9.09c (503 aa).

Gly247–Gly252 contacts NAD(+). Ser248 is modified (phosphoserine). Glu270 serves as the catalytic Proton acceptor. The Nucleophile role is filled by Cys304. Ser501 carries the post-translational modification Phosphoserine.

Belongs to the aldehyde dehydrogenase family.

This is Putative aldehyde dehydrogenase-like protein C9E9.09c from Schizosaccharomyces pombe (strain 972 / ATCC 24843) (Fission yeast).